The primary structure comprises 421 residues: UDP-N-acetylglucosamine 1-carboxyvinyltransferase (421 aa).

Position 22–23 (22–23 (KN)) interacts with phosphoenolpyruvate. Arg94 is a binding site for UDP-N-acetyl-alpha-D-glucosamine. Cys118 functions as the Proton donor in the catalytic mechanism. Residue Cys118 is modified to 2-(S-cysteinyl)pyruvic acid O-phosphothioketal. Residues 163–166 (KVSV), Asp308, and Ile330 contribute to the UDP-N-acetyl-alpha-D-glucosamine site.

It belongs to the EPSP synthase family. MurA subfamily.

It is found in the cytoplasm. It catalyses the reaction phosphoenolpyruvate + UDP-N-acetyl-alpha-D-glucosamine = UDP-N-acetyl-3-O-(1-carboxyvinyl)-alpha-D-glucosamine + phosphate. It participates in cell wall biogenesis; peptidoglycan biosynthesis. In terms of biological role, cell wall formation. Adds enolpyruvyl to UDP-N-acetylglucosamine. In Orientia tsutsugamushi (strain Ikeda) (Rickettsia tsutsugamushi), this protein is UDP-N-acetylglucosamine 1-carboxyvinyltransferase.